The following is a 324-amino-acid chain: D-alanine--D-alanine ligase (324 aa).

The region spanning 120–322 (NNYLRGFGVE…LKEILTEIIE (203 aa)) is the ATP-grasp domain. 149-204 (IDKLGLPLIVKPNDGGSSFGVTKVTNITQIQLAIRNAFNEGEGVLIESFIPGTEIT) is a binding site for ATP. Residues Asp276, Glu289, and Asn291 each coordinate Mg(2+).

The protein belongs to the D-alanine--D-alanine ligase family. Mg(2+) is required as a cofactor. Mn(2+) serves as cofactor.

The protein localises to the cytoplasm. It catalyses the reaction 2 D-alanine + ATP = D-alanyl-D-alanine + ADP + phosphate + H(+). The protein operates within cell wall biogenesis; peptidoglycan biosynthesis. Its function is as follows. Cell wall formation. The protein is D-alanine--D-alanine ligase of Azobacteroides pseudotrichonymphae genomovar. CFP2.